The following is a 374-amino-acid chain: Chaperone protein DnaJ (374 aa).

The region spanning 5–70 is the J domain; sequence DYYEVLGVNL…RKRASYDQFG (66 aa). A CR-type zinc finger spans residues 133–210; it reads GLSRTIKVPT…CHGQGRQQQT (78 aa). Residues Cys-146, Cys-149, Cys-162, Cys-165, Cys-184, Cys-187, Cys-198, and Cys-201 each contribute to the Zn(2+) site. 4 CXXCXGXG motif repeats span residues 146–153, 162–169, 184–191, and 198–205; these read CKTCNGSG, CPRCNGSG, CSVCRGRG, and CTDCHGQG.

The protein belongs to the DnaJ family. In terms of assembly, homodimer. Requires Zn(2+) as cofactor.

The protein localises to the cytoplasm. Its function is as follows. Participates actively in the response to hyperosmotic and heat shock by preventing the aggregation of stress-denatured proteins and by disaggregating proteins, also in an autonomous, DnaK-independent fashion. Unfolded proteins bind initially to DnaJ; upon interaction with the DnaJ-bound protein, DnaK hydrolyzes its bound ATP, resulting in the formation of a stable complex. GrpE releases ADP from DnaK; ATP binding to DnaK triggers the release of the substrate protein, thus completing the reaction cycle. Several rounds of ATP-dependent interactions between DnaJ, DnaK and GrpE are required for fully efficient folding. Also involved, together with DnaK and GrpE, in the DNA replication of plasmids through activation of initiation proteins. The protein is Chaperone protein DnaJ of Coxiella burnetii (strain RSA 493 / Nine Mile phase I).